The chain runs to 249 residues: Capsid protein (249 aa).

Positions Met-1–Asp-33 are disordered. Residues Arg-17–Lys-28 show a composition bias toward basic and acidic residues.

Belongs to the closteroviridae capsid protein family.

The protein resides in the virion. In terms of biological role, capsid protein self-assembles to form filamentous capsids, about 650-850 nm in length. This Beta vulgaris (Sugar beet) protein is Capsid protein.